Consider the following 251-residue polypeptide: Hydroxyacylglutathione hydrolase (251 aa).

7 residues coordinate Zn(2+): His53, His55, Asp57, His58, His110, Asp127, and His165.

This sequence belongs to the metallo-beta-lactamase superfamily. Glyoxalase II family. In terms of assembly, monomer. The cofactor is Zn(2+).

The catalysed reaction is an S-(2-hydroxyacyl)glutathione + H2O = a 2-hydroxy carboxylate + glutathione + H(+). The protein operates within secondary metabolite metabolism; methylglyoxal degradation; (R)-lactate from methylglyoxal: step 2/2. Functionally, thiolesterase that catalyzes the hydrolysis of S-D-lactoyl-glutathione to form glutathione and D-lactic acid. The polypeptide is Hydroxyacylglutathione hydrolase (Klebsiella pneumoniae subsp. pneumoniae (strain ATCC 700721 / MGH 78578)).